Consider the following 656-residue polypeptide: Heparan-alpha-glucosaminide N-acetyltransferase (656 aa).

Positions 1 to 31 (MTGGSSSRRRRAEERSSAAGTERNSRREAVG) are disordered. Over 1 to 185 (MTGGSSSRRR…IIVNENPVDS (185 aa)) the chain is Lumenal, vesicle. N-linked (GlcNAc...) asparagine glycans are attached at residues Asn-137 and Asn-157. Cys-146 and Cys-455 are disulfide-bonded. Residues 186–206 (NLPVSIAFLVGLALIVAVSLL) form a helical membrane-spanning segment. Topologically, residues 207–268 (RLLLSLDDVN…NRLRCVDTFR (62 aa)) are cytoplasmic. Residues 234 to 253 (SELGSPSRADPLSADYQPET) are disordered. Ser-238 and Ser-240 each carry phosphoserine. At Tyr-249 the chain carries Phosphotyrosine. The chain crosses the membrane as a helical span at residues 269-289 (GLALVLMVFVNYGGGKYWYFK). Residue His-290 is part of the active site. Residues 290 to 295 (HSSWNG) lie on the Lumenal, vesicle side of the membrane. Residues 296-316 (LTVADLVFPWFVFIMGTSIFL) form a helical membrane-spanning segment. Over 317 to 338 (SMTSILQRGCSKLKLLGKIVWR) the chain is Cytoplasmic. Residues 339-359 (SFLLICIGVIIVNPNYCLGPL) traverse the membrane as a helical segment. At 360–367 (SWDKVRIP) the chain is on the lumenal, vesicle side. Residues 368–388 (GVLQRLGVTYFVVAVLEFFFW) traverse the membrane as a helical segment. The Cytoplasmic segment spans residues 389-413 (KPVPDSCTLESSCFSLRDITSSWPQ). A helical membrane pass occupies residues 414-434 (WLTILTLESIWLALTFFLPVP). At 435-493 (GCPTGYLGPGGIGDLGKYPHCTGGAAGYIDRLLLGDNHLYQHPSSTVLYHTEVAYDPEG) the chain is on the lumenal, vesicle side. The helical transmembrane segment at 494-514 (VLGTINSIVMAFLGVQAGKIL) threads the bilayer. The Cytoplasmic segment spans residues 515-522 (VYYKDQTK). A helical transmembrane segment spans residues 523 to 543 (AILTRFAAWCCILGLISIVLT). Residues 544–557 (KVSANEGFIPINKN) lie on the Lumenal, vesicle side of the membrane. A helical membrane pass occupies residues 558 to 578 (LWSISYVTTLSCFAFFILLIL). Topologically, residues 579–585 (YPVVDVK) are cytoplasmic. A helical transmembrane segment spans residues 586-606 (GLWTGTPFFYPGMNSILVYVG). Residues 607-627 (HEVLENYFPFQWKLADEQSHK) lie on the Lumenal, vesicle side of the membrane. The helical transmembrane segment at 628–648 (EHLIQNIVATALWVLIAYVLY) threads the bilayer. Positions 641–656 (VLIAYVLYKKKLFWKI) are lysosomal targeting region. At 649–656 (KKKLFWKI) the chain is on the cytoplasmic side.

Homooligomer. Homooligomerization is necessary for enzyme activity. Undergoes intralysosomal proteolytic cleavage; occurs within the end of the first and/or the beginning of the second luminal domain and is essential for the activation of the enzyme. In terms of processing, glycosylated. In terms of tissue distribution, expressed in the retina.

The protein resides in the lysosome membrane. It carries out the reaction alpha-D-glucosaminyl-[heparan sulfate](n) + acetyl-CoA = N-acetyl-alpha-D-glucosaminyl-[heparan sulfate](n) + CoA + H(+). Functionally, lysosomal acetyltransferase that acetylates the non-reducing terminal alpha-glucosamine residue of intralysosomal heparin or heparan sulfate, converting it into a substrate for luminal alpha-N-acetyl glucosaminidase. This Mus musculus (Mouse) protein is Heparan-alpha-glucosaminide N-acetyltransferase (Hgsnat).